The chain runs to 73 residues: Dermaseptin-1 (73 aa).

The signal sequence occupies residues 1–22 (MAFLKKSIFLALFLGMVSLSIC). The propeptide at 23 to 43 (EEEKRENEGEEEQEDDEQSEM) is removed in mature form. Positions 25–46 (EKRENEGEEEQEDDEQSEMKRG) are disordered. Residues 30-40 (EGEEEQEDDEQ) show a composition bias toward acidic residues. Residue Leu70 is modified to Leucine amide. Positions 72 to 73 (EQ) are cleaved as a propeptide — removed in mature form.

Expressed by the skin glands.

Its subcellular location is the secreted. Has antiparasitic activity against trypomastigote form of T.cruzi (IC(50)=0.68 uM) in vitro but not against L.infantum. Probably acts by permeabilizing cell membranes. In vitro, shows no cytotoxicity against macrophages. Has antibacterial activity. This Pithecopus nordestinus (Northeastern Brazilian leaf frog) protein is Dermaseptin-1.